Here is a 58-residue protein sequence, read N- to C-terminus: Photosystem II reaction center protein K (58 aa).

Positions 1 to 21 (MTVSYSIYLENSLHFGDALLA) are excised as a propeptide. Residues 29–49 (IFDPIVDVMPVIPVFFLLLAF) traverse the membrane as a helical segment.

This sequence belongs to the PsbK family. PSII is composed of 1 copy each of membrane proteins PsbA, PsbB, PsbC, PsbD, PsbE, PsbF, PsbH, PsbI, PsbJ, PsbK, PsbL, PsbM, PsbT, PsbX, PsbY, PsbZ, Psb30/Ycf12, at least 3 peripheral proteins of the oxygen-evolving complex and a large number of cofactors. It forms dimeric complexes.

Its subcellular location is the plastid. The protein localises to the chloroplast thylakoid membrane. In terms of biological role, one of the components of the core complex of photosystem II (PSII). PSII is a light-driven water:plastoquinone oxidoreductase that uses light energy to abstract electrons from H(2)O, generating O(2) and a proton gradient subsequently used for ATP formation. It consists of a core antenna complex that captures photons, and an electron transfer chain that converts photonic excitation into a charge separation. The sequence is that of Photosystem II reaction center protein K from Adiantum capillus-veneris (Maidenhair fern).